We begin with the raw amino-acid sequence, 439 residues long: Ribosomal protein uS12 methylthiotransferase RimO (439 aa).

One can recognise an MTTase N-terminal domain in the interval methionine 1–glutamine 117. 6 residues coordinate [4Fe-4S] cluster: cysteine 10, cysteine 46, cysteine 80, cysteine 154, cysteine 158, and cysteine 161. The 231-residue stretch at threonine 140–glutamine 370 folds into the Radical SAM core domain. Residues leucine 373–glutamine 439 form the TRAM domain.

It belongs to the methylthiotransferase family. RimO subfamily. [4Fe-4S] cluster is required as a cofactor.

Its subcellular location is the cytoplasm. It catalyses the reaction L-aspartate(89)-[ribosomal protein uS12]-hydrogen + (sulfur carrier)-SH + AH2 + 2 S-adenosyl-L-methionine = 3-methylsulfanyl-L-aspartate(89)-[ribosomal protein uS12]-hydrogen + (sulfur carrier)-H + 5'-deoxyadenosine + L-methionine + A + S-adenosyl-L-homocysteine + 2 H(+). In terms of biological role, catalyzes the methylthiolation of an aspartic acid residue of ribosomal protein uS12. This is Ribosomal protein uS12 methylthiotransferase RimO from Syntrophomonas wolfei subsp. wolfei (strain DSM 2245B / Goettingen).